Reading from the N-terminus, the 212-residue chain is Ras-related protein Rab-15 (212 aa).

GTP-binding residues include serine 17, glycine 18, valine 19, glycine 20, lysine 21, threonine 22, cysteine 23, serine 35, serine 39, and threonine 40. Residue threonine 22 participates in Mg(2+) binding. 2 short sequence motifs (switch) span residues 31-45 (NEFHSSHISTIGVDF) and 63-80 (DTAGQERYQTITKQYYRR). Mg(2+) contacts are provided by threonine 40 and aspartate 63. 6 residues coordinate GTP: glycine 66, asparagine 121, lysine 122, aspartate 124, serine 151, and alanine 152. Residues 193-212 (LEEEEGKPEGPANSSKTCWC) are disordered. S-geranylgeranyl cysteine attachment occurs at residues cysteine 210 and cysteine 212. Residue cysteine 212 is modified to Cysteine methyl ester.

It belongs to the small GTPase superfamily. Rab family. As to quaternary structure, the GTP bound form of RAB15 interacts with REP15. Interacts (GTP-bound form) with MICAL1, MICAL3, MICALCL, EHBP1 and EHBP1L1. Requires Mg(2+) as cofactor.

The protein resides in the cell membrane. The enzyme catalyses GTP + H2O = GDP + phosphate + H(+). Its activity is regulated as follows. Regulated by guanine nucleotide exchange factors (GEFs) which promote the exchange of bound GDP for free GTP. Regulated by GTPase activating proteins (GAPs) which increase the GTP hydrolysis activity. Inhibited by GDP dissociation inhibitors (GDIs). The small GTPases Rab are key regulators of intracellular membrane trafficking, from the formation of transport vesicles to their fusion with membranes. Rabs cycle between an inactive GDP-bound form and an active GTP-bound form that is able to recruit to membranes different sets of downstream effectors directly responsible for vesicle formation, movement, tethering and fusion. RAB15 may act in concert with RAB3A in regulating aspects of synaptic vesicle membrane flow within the nerve terminal. This chain is Ras-related protein Rab-15, found in Homo sapiens (Human).